Reading from the N-terminus, the 227-residue chain is PKHD-type hydroxylase Neut_0373 (227 aa).

A Fe2OG dioxygenase domain is found at 78 to 179 (KIMPPFFNRY…RIACFMFIQS (102 aa)). 3 residues coordinate Fe cation: His97, Asp99, and His160. 2-oxoglutarate is bound at residue Arg170.

Fe(2+) is required as a cofactor. L-ascorbate serves as cofactor.

This Nitrosomonas eutropha (strain DSM 101675 / C91 / Nm57) protein is PKHD-type hydroxylase Neut_0373.